A 120-amino-acid chain; its full sequence is UPF0382 membrane protein SSP2132 (120 aa).

4 helical membrane passes run 3 to 23 (VFII…AFGA), 46 to 66 (MYHG…SINV), 69 to 89 (VGWL…ILAL), and 94 to 114 (IIGA…LMLV).

This sequence belongs to the UPF0382 family.

It localises to the cell membrane. The protein is UPF0382 membrane protein SSP2132 of Staphylococcus saprophyticus subsp. saprophyticus (strain ATCC 15305 / DSM 20229 / NCIMB 8711 / NCTC 7292 / S-41).